The chain runs to 83 residues: Small integral membrane protein 22 (83 aa).

Residues 32–52 form a helical membrane-spanning segment; sequence VAFIVFLTFMGTVLLLLLLVV. Positions 60–83 are disordered; it reads SPGPRRESPRKERPKGVDNLALEP. Positions 63–75 are enriched in basic and acidic residues; that stretch reads PRRESPRKERPKG.

Interacts with CANX and DDOST. Interacts with SQLE; this interaction modulates lipid droplet formation.

The protein resides in the membrane. The protein localises to the late endosome. In terms of biological role, may modulate lipid droplet formation throught interaction with SQLE. The sequence is that of Small integral membrane protein 22 from Homo sapiens (Human).